Reading from the N-terminus, the 1583-residue chain is Dynamin-binding protein (1583 aa).

At methionine 1 the chain carries N-acetylmethionine. SH3 domains follow at residues glutamate 2–isoleucine 61, glutamate 66–leucine 126, tyrosine 145–proline 204, and glutamine 243–lysine 302. 3 disordered regions span residues histidine 217 to proline 244, glutamate 306 to glutamate 329, and glutamate 366 to tyrosine 464. Residues glycine 224–glutamine 243 are compositionally biased toward acidic residues. The segment covering glutamate 366–threonine 379 has biased composition (basic and acidic residues). The span at glutamate 406–tyrosine 442 shows a compositional bias: polar residues. The residue at position 495 (serine 495) is a Phosphoserine. 2 disordered regions span residues arginine 594 to glutamine 656 and leucine 671 to aspartate 693. Pro residues predominate over residues proline 637 to proline 653. A compositionally biased stretch (basic and acidic residues) spans glutamate 675–proline 685. Residues leucine 742–methionine 762 are a coiled coil. A DH domain is found at lysine 791–tyrosine 974. One can recognise a BAR domain in the interval leucine 1015–leucine 1224. The 64-residue stretch at proline 1292–threonine 1355 folds into the SH3 5 domain. A disordered region spans residues arginine 1357–threonine 1496. The span at aspartate 1361–serine 1387 shows a compositional bias: low complexity. Over residues glycine 1388–threonine 1414 the composition is skewed to polar residues. Low complexity predominate over residues serine 1433–proline 1456. An SH3 6 domain is found at glutamate 1519 to tyrosine 1582.

As to quaternary structure, binds DNM1 via its N-terminal SH3 domains. The C-terminal SH3 domain binds a complex containing actin, tubulin, Hsp70 and actin-regulatory proteins, such as ENAH, EVL, WIRE, CR16, WAVE1 and NAP1L1. Interacts with FASLG. Interacts (via SH3 domain 6) with WASL. Interacts (via SH3 domain 6) interacts with ENAH. Interacts (via C-terminal domain) with TJP1; required for the apical cell-cell junction localization of DNMBP.

It localises to the cytoplasm. The protein localises to the golgi apparatus. It is found in the golgi stack. The protein resides in the cytoskeleton. Its subcellular location is the synapse. It localises to the cell junction. In terms of biological role, plays a critical role as a guanine nucleotide exchange factor (GEF) for CDC42 in several intracellular processes associated with the actin and microtubule cytoskeleton. Regulates the structure of apical junctions in epithelial cells. Participates in the normal lumenogenesis of epithelial cell cysts by regulating spindle orientation. Plays a key role in ciliogenesis and cyst formation. May play a role in membrane trafficking between the cell surface and the Golgi. This is Dynamin-binding protein from Canis lupus familiaris (Dog).